The primary structure comprises 56 residues: UPF0391 membrane protein PSHAa0537 (56 aa).

The next 2 membrane-spanning stretches (helical) occupy residues I6–A26 and A27–V47.

The protein belongs to the UPF0391 family.

It is found in the cell membrane. The chain is UPF0391 membrane protein PSHAa0537 from Pseudoalteromonas translucida (strain TAC 125).